A 608-amino-acid polypeptide reads, in one-letter code: Isocitrate dehydrogenase kinase/phosphatase (608 aa).

ATP-binding positions include 327–333 (APGIKGL) and Lys348. Asp383 is a catalytic residue.

The protein belongs to the AceK family.

The protein localises to the cytoplasm. The enzyme catalyses L-seryl-[isocitrate dehydrogenase] + ATP = O-phospho-L-seryl-[isocitrate dehydrogenase] + ADP + H(+). Bifunctional enzyme which can phosphorylate or dephosphorylate isocitrate dehydrogenase (IDH) on a specific serine residue. This is a regulatory mechanism which enables bacteria to bypass the Krebs cycle via the glyoxylate shunt in response to the source of carbon. When bacteria are grown on glucose, IDH is fully active and unphosphorylated, but when grown on acetate or ethanol, the activity of IDH declines drastically concomitant with its phosphorylation. The polypeptide is Isocitrate dehydrogenase kinase/phosphatase (Burkholderia ambifaria (strain ATCC BAA-244 / DSM 16087 / CCUG 44356 / LMG 19182 / AMMD) (Burkholderia cepacia (strain AMMD))).